Here is a 220-residue protein sequence, read N- to C-terminus: Deoxyribose-phosphate aldolase (220 aa).

Asp89 serves as the catalytic Proton donor/acceptor. Lys151 (schiff-base intermediate with acetaldehyde) is an active-site residue. Lys180 functions as the Proton donor/acceptor in the catalytic mechanism.

It belongs to the DeoC/FbaB aldolase family. DeoC type 1 subfamily.

The protein resides in the cytoplasm. The catalysed reaction is 2-deoxy-D-ribose 5-phosphate = D-glyceraldehyde 3-phosphate + acetaldehyde. Its pathway is carbohydrate degradation; 2-deoxy-D-ribose 1-phosphate degradation; D-glyceraldehyde 3-phosphate and acetaldehyde from 2-deoxy-alpha-D-ribose 1-phosphate: step 2/2. Functionally, catalyzes a reversible aldol reaction between acetaldehyde and D-glyceraldehyde 3-phosphate to generate 2-deoxy-D-ribose 5-phosphate. In Staphylococcus epidermidis (strain ATCC 35984 / DSM 28319 / BCRC 17069 / CCUG 31568 / BM 3577 / RP62A), this protein is Deoxyribose-phosphate aldolase.